The primary structure comprises 338 residues: Anthocyanidin reductase ((2S)-flavan-3-ol-forming) (338 aa).

Residues 18–21 (TGFV), Lys-48, 87–90 (VATP), and Tyr-168 contribute to the NADP(+) site.

Belongs to the NAD(P)-dependent epimerase/dehydratase family. Dihydroflavonol-4-reductase subfamily.

The catalysed reaction is a (2S,3R)-flavan-3-ol + 2 NADP(+) = an anthocyanidin with a 3-hydroxy group + 2 NADPH + 2 H(+). It catalyses the reaction a (2S,3S)-flavan-3-ol + 2 NADP(+) = an anthocyanidin with a 3-hydroxy group + 2 NADPH + 2 H(+). It participates in secondary metabolite biosynthesis; flavonoid biosynthesis. Functionally, produces the terminal flavan-3-ol monomers required for the formation of proanthocyanidins or condensed tannins in leaves and flowers, as well as in the skin and seeds of developing berries. Behaves as a reductase and as a C-3 epimerase. Catalyzes the double reduction of anthocyanidins, producing a mixture of (2S,3S)- and (2S,3R)-flavan-3-ols. The enzyme catalyzes sequential hydride transfers to C-2 and C-4, respectively and epimerization at C-3 is achieved by tautomerization that occurs between the two hydride transfers. Converts cyanidin, pelargonidin and delphinidin into catechin and epicatechin, afzelechin and epiafzelechin, and gallocatechin and epigallocatechin respectively. In Vitis vinifera (Grape), this protein is Anthocyanidin reductase ((2S)-flavan-3-ol-forming).